We begin with the raw amino-acid sequence, 385 residues long: DnaJ homolog subfamily C member 28 (385 aa).

The J domain occupies 48–132 (EYYRLLNLDE…EGKFKYNTPQ (85 aa)). Residues 261–318 (KEIKDTIEQLREALLMSRKKLGNPLSPTEQKQWAQVCEQFQEKIRKLNKRINDFNLIV) are a coiled coil.

May have a role in protein folding or as a chaperone. This chain is DnaJ homolog subfamily C member 28 (Dnajc28), found in Mus musculus (Mouse).